Consider the following 335-residue polypeptide: D-alanine--D-alanine ligase (335 aa).

The ATP-grasp domain maps to 124 to 329; sequence KMWFSALGVP…FTHYLYSNIK (206 aa). Residue 154–209 participates in ATP binding; it reads ALENWGSIFIKAASQGSSVGCYRVDSQDELVSSLEQAFSFSPYVIVEKTINARELE. The Mg(2+) site is built by Asp-283, Glu-296, and Asn-298.

The protein belongs to the D-alanine--D-alanine ligase family. The cofactor is Mg(2+). Requires Mn(2+) as cofactor.

Its subcellular location is the cytoplasm. It carries out the reaction 2 D-alanine + ATP = D-alanyl-D-alanine + ADP + phosphate + H(+). Its pathway is cell wall biogenesis; peptidoglycan biosynthesis. Cell wall formation. This Shewanella woodyi (strain ATCC 51908 / MS32) protein is D-alanine--D-alanine ligase.